The primary structure comprises 742 residues: mRNA export factor ICP27 homolog (742 aa).

The span at Met1–Ala11 shows a compositional bias: basic and acidic residues. The tract at residues Met1–Gln202 is disordered. The segment covering Ser72–Arg85 has biased composition (basic residues). The segment covering Lys153–His171 has biased composition (basic and acidic residues). Polar residues predominate over residues Cys179 to Gln202. The Zn(2+) site is built by Cys387, His494, Cys496, and Cys501. The CHC2-type zinc-finger motif lies at Cys387 to Cys501. Residues Ala540 to Asp742 form a disordered region. Residues Tyr578 to His587 are compositionally biased toward basic and acidic residues. Positions Gly614 to Ser626 are enriched in acidic residues. Residues Gln692 to Thr703 show a composition bias toward polar residues.

This sequence belongs to the HHV-1 ICP27 protein family. In terms of assembly, self-associates and forms high-molecular-mass complexes. Interacts with host DDX39A and DDX39B; these interactions are required for UL69 function in mRNA export. Interacts with host SUPT6H, EIF4A1 and PABPC1. Post-translationally, phosphorylated by UL97 and host CDK1, CDK7 and CD9. Phosphorylation by CDKs impacts on UL69 nuclear localization and activity.

The protein resides in the virion tegument. The protein localises to the virion. It localises to the host nucleus. It is found in the host cytoplasm. Its function is as follows. Immediate early (EI) protein that plays many roles during productive infection including regulation of host cell cycle progression, regulation of viral gene expression or nuclear export of intronless viral RNAs. Acts as a transcriptional transactivator via interaction with the cellular transcription elongation factor SUPT6H and as a nuclear RNA export factor via interaction with UAP56, a component of the cellular mRNA export machinery. The polypeptide is mRNA export factor ICP27 homolog (Human cytomegalovirus (strain Merlin) (HHV-5)).